Reading from the N-terminus, the 76-residue chain is Conotoxin Gla(1)-TxVI (76 aa).

The first 19 residues, 1–19, serve as a signal peptide directing secretion; sequence MEKLTILLLVAAVLMSTQA. The propeptide occupies 20–45; the sequence is LVERAGENHSKENINFLLKRKRAADR. Residue Trp-48 is modified to 6'-bromotryptophan. Position 50 is a 4-carboxyglutamate (Glu-50). Cystine bridges form between Cys-51-Cys-65, Cys-58-Cys-69, and Cys-64-Cys-73. 4-hydroxyproline is present on Pro-61. 4-carboxyglutamate is present on residues Glu-63, Glu-67, and Glu-70. Trp-76 carries the post-translational modification 6'-bromotryptophan.

Expressed by the venom duct.

The protein localises to the secreted. This chain is Conotoxin Gla(1)-TxVI, found in Conus textile (Cloth-of-gold cone).